A 333-amino-acid polypeptide reads, in one-letter code: Arylacetonitrilase (333 aa).

The CN hydrolase domain occupies 9–284; that stretch reads VRVAVTQAEP…EGIIYADLEM (276 aa). Residue glutamate 49 is the Proton acceptor of the active site. Lysine 129 is a catalytic residue. Cysteine 164 (nucleophile) is an active-site residue.

This sequence belongs to the carbon-nitrogen hydrolase superfamily. Nitrilase family.

The catalysed reaction is a nitrile + 2 H2O = a carboxylate + NH4(+). It carries out the reaction 4-chlorophenylacetonitrile + 2 H2O = 4-chlorophenylacetate + NH4(+). Nitrilase that hydrolyzes preferentially phenylacetonitrile, (R,S)-mandelonitrile, and 3-indolylacetonitrile. This Aspergillus oryzae (strain ATCC 42149 / RIB 40) (Yellow koji mold) protein is Arylacetonitrilase.